We begin with the raw amino-acid sequence, 141 residues long: Probable mitochondrial pyruvate carrier 1 (141 aa).

The next 2 helical transmembrane spans lie at 31–52 (YLCSTHFWGPLSNFGIPIAAIL) and 60–82 (LISGRMTGALILYSSVFMRYAWM).

Belongs to the mitochondrial pyruvate carrier (MPC) (TC 2.A.105) family. The functional 150 kDa pyruvate import complex is a heteromer of mpc1 and mpc2.

The protein resides in the mitochondrion. It localises to the mitochondrion inner membrane. Mediates the uptake of pyruvate into mitochondria. The polypeptide is Probable mitochondrial pyruvate carrier 1 (Schizosaccharomyces pombe (strain 972 / ATCC 24843) (Fission yeast)).